The primary structure comprises 459 residues: ATP synthase subunit beta (459 aa).

148–155 (GGAGVGKT) contacts ATP.

It belongs to the ATPase alpha/beta chains family. In terms of assembly, F-type ATPases have 2 components, CF(1) - the catalytic core - and CF(0) - the membrane proton channel. CF(1) has five subunits: alpha(3), beta(3), gamma(1), delta(1), epsilon(1). CF(0) has three main subunits: a(1), b(2) and c(9-12). The alpha and beta chains form an alternating ring which encloses part of the gamma chain. CF(1) is attached to CF(0) by a central stalk formed by the gamma and epsilon chains, while a peripheral stalk is formed by the delta and b chains.

Its subcellular location is the cell inner membrane. It carries out the reaction ATP + H2O + 4 H(+)(in) = ADP + phosphate + 5 H(+)(out). Produces ATP from ADP in the presence of a proton gradient across the membrane. The catalytic sites are hosted primarily by the beta subunits. This chain is ATP synthase subunit beta, found in Cellvibrio japonicus (strain Ueda107) (Pseudomonas fluorescens subsp. cellulosa).